A 334-amino-acid chain; its full sequence is HTH-type transcriptional repressor PurR (334 aa).

The region spanning 2 to 56 (ATIKDVARLAGVSTTTVSHVINKTRFVAETTQEKVMKAVDELNYAPSAVARSLKC) is the HTH lacI-type domain. A DNA-binding region (H-T-H motif) is located at residues 4-23 (IKDVARLAGVSTTTVSHVIN). Residues 48–56 (SAVARSLKC) mediate DNA binding. 4 residues coordinate hypoxanthine: phenylalanine 73, lysine 189, phenylalanine 220, and aspartate 274.

As to quaternary structure, homodimer.

It functions in the pathway purine metabolism; purine nucleotide biosynthesis [regulation]. In terms of biological role, is the main repressor of the genes involved in the de novo synthesis of purine nucleotides, regulating purB, purC, purEK, purF, purHD, purL, purMN and guaBA expression. PurR is allosterically activated to bind its cognate DNA by binding the purine corepressors, hypoxanthine or guanine, thereby effecting transcription repression. This is HTH-type transcriptional repressor PurR from Vibrio campbellii (strain ATCC BAA-1116).